Consider the following 273-residue polypeptide: Undecaprenyl-diphosphatase (273 aa).

Helical transmembrane passes span 45 to 65 (AKTFEVVIQLGSILAVVVMFW), 90 to 110 (LTLIHILLGMVPAVVLGLIFH), 116 to 136 (LFNPINVMYALVVGGVLLIAA), 154 to 173 (YRQAFMIGCFQCLALWPGFS), 190 to 210 (YAASEFSFLLAVPMMMGATAL), 222 to 242 (ADFPMFAVGFVTAFLVALVAI), and 252 to 272 (ISFIPFAIYRFIVAAAVYVVF).

This sequence belongs to the UppP family.

The protein resides in the cell inner membrane. The catalysed reaction is di-trans,octa-cis-undecaprenyl diphosphate + H2O = di-trans,octa-cis-undecaprenyl phosphate + phosphate + H(+). Catalyzes the dephosphorylation of undecaprenyl diphosphate (UPP). Confers resistance to bacitracin. The chain is Undecaprenyl-diphosphatase from Enterobacter sp. (strain 638).